Consider the following 957-residue polypeptide: Glycine dehydrogenase (decarboxylating) (957 aa).

Lysine 708 is subject to N6-(pyridoxal phosphate)lysine.

The protein belongs to the GcvP family. In terms of assembly, the glycine cleavage system is composed of four proteins: P, T, L and H. Pyridoxal 5'-phosphate serves as cofactor.

It carries out the reaction N(6)-[(R)-lipoyl]-L-lysyl-[glycine-cleavage complex H protein] + glycine + H(+) = N(6)-[(R)-S(8)-aminomethyldihydrolipoyl]-L-lysyl-[glycine-cleavage complex H protein] + CO2. In terms of biological role, the glycine cleavage system catalyzes the degradation of glycine. The P protein binds the alpha-amino group of glycine through its pyridoxal phosphate cofactor; CO(2) is released and the remaining methylamine moiety is then transferred to the lipoamide cofactor of the H protein. This is Glycine dehydrogenase (decarboxylating) from Salmonella paratyphi B (strain ATCC BAA-1250 / SPB7).